Consider the following 294-residue polypeptide: Bifunctional protein FolD (294 aa).

NADP(+) is bound by residues glycine 166–serine 168, serine 195, and isoleucine 236.

This sequence belongs to the tetrahydrofolate dehydrogenase/cyclohydrolase family. In terms of assembly, homodimer.

It catalyses the reaction (6R)-5,10-methylene-5,6,7,8-tetrahydrofolate + NADP(+) = (6R)-5,10-methenyltetrahydrofolate + NADPH. It carries out the reaction (6R)-5,10-methenyltetrahydrofolate + H2O = (6R)-10-formyltetrahydrofolate + H(+). It participates in one-carbon metabolism; tetrahydrofolate interconversion. In terms of biological role, catalyzes the oxidation of 5,10-methylenetetrahydrofolate to 5,10-methenyltetrahydrofolate and then the hydrolysis of 5,10-methenyltetrahydrofolate to 10-formyltetrahydrofolate. The chain is Bifunctional protein FolD from Chloroherpeton thalassium (strain ATCC 35110 / GB-78).